We begin with the raw amino-acid sequence, 337 residues long: Glyceraldehyde-3-phosphate dehydrogenase (337 aa).

NAD(+)-binding positions include Arg13–Ile14, Asp35, and Lys80. D-glyceraldehyde 3-phosphate-binding positions include Ser151–Thr153, Thr182, Thr211–Gly212, and Arg234. Residue Cys152 is the Nucleophile of the active site. NAD(+) is bound at residue Asn316.

This sequence belongs to the glyceraldehyde-3-phosphate dehydrogenase family. Homotetramer.

The protein resides in the cytoplasm. The enzyme catalyses D-glyceraldehyde 3-phosphate + phosphate + NAD(+) = (2R)-3-phospho-glyceroyl phosphate + NADH + H(+). Its pathway is carbohydrate degradation; glycolysis; pyruvate from D-glyceraldehyde 3-phosphate: step 1/5. The protein is Glyceraldehyde-3-phosphate dehydrogenase (GAPD) of Mycosarcoma maydis (Corn smut fungus).